A 201-amino-acid chain; its full sequence is Regulator of G-protein signaling 16 (201 aa).

2 S-palmitoyl cysteine lipidation sites follow: Cys-2 and Cys-12. An RGS domain is found at 64 to 180 (SFDLLLNSKN…LKSPAYRDLA (117 aa)). Tyr-167 carries the post-translational modification Phosphotyrosine; by EGFR. Residue Tyr-176 is modified to Phosphotyrosine. The interval 181–201 (AQASATSTSAPSGSPAEPSHT) is disordered.

As to quaternary structure, interacts with GNAI1 and GNAQ. Interacts with GNAI3, GNAI3 and GNAO1. In terms of processing, palmitoylated on Cys-2 and/or Cys-12. Phosphorylated. Phosphorylation at Tyr-167 by EGFR enhances GTPase accelerating (GAP) activity toward GNAI1. As to expression, retinal; also predominantly expressed in the liver and pituitary.

The protein resides in the membrane. Its function is as follows. Regulates G protein-coupled receptor signaling cascades. Inhibits signal transduction by increasing the GTPase activity of G protein alpha subunits, thereby driving them into their inactive GDP-bound form. Plays an important role in the phototransduction cascade by regulating the lifetime and effective concentration of activated transducin alpha. May regulate extra and intracellular mitogenic signals. In Mus musculus (Mouse), this protein is Regulator of G-protein signaling 16 (Rgs16).